A 400-amino-acid polypeptide reads, in one-letter code: Acetate kinase (400 aa).

Asparagine 10 provides a ligand contact to Mg(2+). Residue lysine 17 coordinates ATP. Residue arginine 91 coordinates substrate. The active-site Proton donor/acceptor is aspartate 150. ATP-binding positions include 210–214, 285–287, and 333–337; these read HLGNG, DCR, and GIGEN. Mg(2+) is bound at residue glutamate 387.

It belongs to the acetokinase family. As to quaternary structure, homodimer. Mg(2+) is required as a cofactor. Mn(2+) serves as cofactor.

It is found in the cytoplasm. The enzyme catalyses acetate + ATP = acetyl phosphate + ADP. It participates in metabolic intermediate biosynthesis; acetyl-CoA biosynthesis; acetyl-CoA from acetate: step 1/2. Catalyzes the formation of acetyl phosphate from acetate and ATP. Can also catalyze the reverse reaction. This is Acetate kinase from Pectobacterium carotovorum subsp. carotovorum (strain PC1).